We begin with the raw amino-acid sequence, 447 residues long: Elongation factor 1-alpha (447 aa).

Positions 5–230 constitute a tr-type G domain; the sequence is KIHISIVVIG…DQINEPKRPS (226 aa). A G1 region spans residues 14-21; the sequence is GHVDSGKS. 14–21 lines the GTP pocket; that stretch reads GHVDSGKS. Lysine 55 carries the N6,N6-dimethyllysine modification. The interval 70-74 is G2; the sequence is GITID. N6,N6,N6-trimethyllysine is present on lysine 79. A G3 region spans residues 91-94; it reads DAPG. Residues 91-95 and 153-156 each bind GTP; these read DAPGH and NKMD. A G4 region spans residues 153 to 156; it reads NKMD. Lysine 187 is subject to N6,N6,N6-trimethyllysine. The tract at residues 194–196 is G5; the sequence is SGF. At lysine 261 the chain carries N6-methyllysine. Glutamate 289 carries the 5-glutamyl glycerylphosphorylethanolamine modification. Lysine 306 is subject to N6,N6,N6-trimethyllysine. Glutamate 362 bears the 5-glutamyl glycerylphosphorylethanolamine mark. An N6,N6,N6-trimethyllysine modification is found at lysine 396.

This sequence belongs to the TRAFAC class translation factor GTPase superfamily. Classic translation factor GTPase family. EF-Tu/EF-1A subfamily.

The protein resides in the cytoplasm. This protein promotes the GTP-dependent binding of aminoacyl-tRNA to the A-site of ribosomes during protein biosynthesis. The polypeptide is Elongation factor 1-alpha (Hordeum vulgare (Barley)).